The chain runs to 128 residues: Large ribosomal subunit protein bL12 (128 aa).

This sequence belongs to the bacterial ribosomal protein bL12 family. As to quaternary structure, homodimer. Part of the ribosomal stalk of the 50S ribosomal subunit. Forms a multimeric L10(L12)X complex, where L10 forms an elongated spine to which 2 to 4 L12 dimers bind in a sequential fashion. Binds GTP-bound translation factors.

Functionally, forms part of the ribosomal stalk which helps the ribosome interact with GTP-bound translation factors. Is thus essential for accurate translation. This Desulfosudis oleivorans (strain DSM 6200 / JCM 39069 / Hxd3) (Desulfococcus oleovorans) protein is Large ribosomal subunit protein bL12.